Here is a 161-residue protein sequence, read N- to C-terminus: Calcium-binding protein CML24 (161 aa).

EF-hand domains lie at 13–48 (GSMD…LSPT), 49–84 (ASPE…GIGG), 90–125 (NDVS…LGEK), and 126–161 (CSVQ…GGGA). Ca(2+) contacts are provided by Asp26, Asn28, Asp30, Lys32, Glu37, Asp62, Asp64, Asn66, Glu73, Asp103, Asp105, Asn107, Arg109, Glu114, Asp139, Asp141, Asp143, Cys145, and Glu150.

As to expression, expressed in seed coat, seedling radical, cotyledons, hypocotyl, shoot apex and elongating root. Expressed in the vasculature of cotyledons, leaves and roots. Highly expressed in guard cells, trichomes and hydathodes. Expressed in inflorescence stem branch points, silique abscission zone, young and mature styles and stigmatic papillae, mature anthers and developing seed.

Its function is as follows. Calcium-binding protein that may positively regulate abscisic acid (ABA) inhibition of germination and seedling development. May be required for photoperiod-induced flowering and function in ion homeostasis. This chain is Calcium-binding protein CML24 (CML24), found in Arabidopsis thaliana (Mouse-ear cress).